Consider the following 238-residue polypeptide: Zinc finger protein ZAT6 (238 aa).

Positions 1–15 are enriched in polar residues; it reads MALETLTSPRLSSPM. The interval 1 to 42 is disordered; sequence MALETLTSPRLSSPMPTLFQDSALGFHGSKGKRSKRSRSEFD. A Nuclear localization signal motif is present at residues 30–38; that stretch reads KGKRSKRSR. C2H2-type zinc fingers lie at residues 89-111 and 148-170; these read YKCSVCDKAFSSYQALGGHKASH and HVCSICHKSFATGQALGGHKRCH. Positions 175–202 are disordered; the sequence is NGGGVSSSVSNSEDVGSTSHVSSGHRGF. Positions 180 to 193 are enriched in low complexity; it reads SSSVSNSEDVGSTS.

Its subcellular location is the nucleus. Its function is as follows. Probable transcription factor that regulates root development and phosphate (Pi) acquisition and homeostasis. Probably acts as a repressor of primary root growth and regulates Pi homeostasis through the control of root architecture. This chain is Zinc finger protein ZAT6 (ZAT6), found in Arabidopsis thaliana (Mouse-ear cress).